The primary structure comprises 122 residues: Large ribosomal subunit protein uL14 (122 aa).

This sequence belongs to the universal ribosomal protein uL14 family. As to quaternary structure, part of the 50S ribosomal subunit. Forms a cluster with proteins L3 and L19. In the 70S ribosome, L14 and L19 interact and together make contacts with the 16S rRNA in bridges B5 and B8.

Functionally, binds to 23S rRNA. Forms part of two intersubunit bridges in the 70S ribosome. This Afipia carboxidovorans (strain ATCC 49405 / DSM 1227 / KCTC 32145 / OM5) (Oligotropha carboxidovorans) protein is Large ribosomal subunit protein uL14.